The primary structure comprises 517 residues: Putative pumilio homolog 21 (517 aa).

Disordered stretches follow at residues 33-57, 69-94, 107-130, and 175-201; these read NHQE…PPLL, KNNQ…PPLV, NHQE…PLLT, and FTPS…PPLS. Low complexity predominate over residues 42–51; sequence NTNINSNNNH. Residues 69 to 84 are compositionally biased toward polar residues; the sequence is KNNQEPGESGNTTINR. Positions 148 to 502 constitute a PUM-HD domain; sequence ESSNNNYPNL…NTLRVIQEEI (355 aa). The span at 177 to 190 shows a compositional bias: polar residues; that stretch reads PSSLTQPDDSSSRY. The Pumilio 1; degenerate repeat unit spans residues 258 to 293; sequence TTKRIFLHLATNQYGSQALRILFRRSPSLDHLLFCA. The Pumilio 2 repeat unit spans residues 294–328; the sequence is VDTNFFLLMSDKYGRGLIIPAIRAVDKTKKESLYK. Residues 329-363 form a Pumilio 3; degenerate repeat; it reads LTYEYTLHLARLETGCLALNNVLQEIRGIYRDLIF. Pumilio repeat units follow at residues 364-400, 401-437, and 438-473; these read ECVA…AIAE, RLRG…EEFR, and GNAK…PLLR.

It localises to the cytoplasm. Functionally, sequence-specific RNA-binding protein that regulates translation and mRNA stability by binding the 3'-UTR of target mRNAs. This Arabidopsis thaliana (Mouse-ear cress) protein is Putative pumilio homolog 21 (APUM21).